Reading from the N-terminus, the 144-residue chain is Large ribosomal subunit protein uL15 (144 aa).

Residues 1-54 (MRLNTLSPAEGSKKAGKRLGRGIGSGLGKTGGRGHKGQKSRSGGGVRRGFEGGQ) form a disordered region. Residues 21–31 (RGIGSGLGKTG) are compositionally biased toward gly residues.

It belongs to the universal ribosomal protein uL15 family. In terms of assembly, part of the 50S ribosomal subunit.

In terms of biological role, binds to the 23S rRNA. This is Large ribosomal subunit protein uL15 from Klebsiella pneumoniae (strain 342).